We begin with the raw amino-acid sequence, 245 residues long: Tetraspanin-6 (245 aa).

The Cytoplasmic segment spans residues 1–19 (MASPSRRLQTKPVITCFKS). The helical transmembrane segment at 20 to 40 (VLLIYTFIFWITGVILLAVGI) threads the bilayer. At 41-59 (WGKVSLENYFSLLNEKATN) the chain is on the extracellular side. The helical transmembrane segment at 60 to 80 (VPFVLIGTGTVIILLGTFGCF) threads the bilayer. The Cytoplasmic portion of the chain corresponds to 81–93 (ATCRASAWMLKLY). Residues 94 to 114 (AMFLTLIFLVELVAAIIGFVF) form a helical membrane-spanning segment. At 115–208 (RHEIKNSLKN…IMVMTIIESE (94 aa)) the chain is on the extracellular side. Asn134 is a glycosylation site (N-linked (GlcNAc...) asparagine). The helical transmembrane segment at 209 to 229 (MGVVAGISFGVACFQLIGIFL) threads the bilayer. At 230–245 (AYCLSRAITNNQYEIV) the chain is on the cytoplasmic side.

Belongs to the tetraspanin (TM4SF) family.

It is found in the membrane. In Bos taurus (Bovine), this protein is Tetraspanin-6 (TSPAN6).